The primary structure comprises 242 residues: Endoplasmic reticulum membrane protein complex subunit 7 (242 aa).

Positions 1-23 (MAAALWGFFPVLLLLLLSGDVQS) are cleaved as a signal peptide. Residues 24–159 (SEVPGAAAEG…IKRESWGWTD (136 aa)) lie on the Lumenal side of the membrane. Residues 160-180 (FLMNPMVMMMVLPLLIFVLLP) form a helical membrane-spanning segment. Over 181–242 (KVVNTSDPDM…TGKSGAGKRR (62 aa)) the chain is Cytoplasmic. The segment at 217-242 (LFSSKSSGKSSSGSSKTGKSGAGKRR) is disordered. A compositionally biased stretch (low complexity) spans 219-235 (SSKSSGKSSSGSSKTGK).

This sequence belongs to the EMC7 family. Component of the ER membrane protein complex (EMC).

It is found in the endoplasmic reticulum membrane. Part of the endoplasmic reticulum membrane protein complex (EMC) that enables the energy-independent insertion into endoplasmic reticulum membranes of newly synthesized membrane proteins. Preferentially accommodates proteins with transmembrane domains that are weakly hydrophobic or contain destabilizing features such as charged and aromatic residues. Involved in the cotranslational insertion of multi-pass membrane proteins in which stop-transfer membrane-anchor sequences become ER membrane spanning helices. It is also required for the post-translational insertion of tail-anchored/TA proteins in endoplasmic reticulum membranes. By mediating the proper cotranslational insertion of N-terminal transmembrane domains in an N-exo topology, with translocated N-terminus in the lumen of the ER, controls the topology of multi-pass membrane proteins like the G protein-coupled receptors. By regulating the insertion of various proteins in membranes, it is indirectly involved in many cellular processes. This chain is Endoplasmic reticulum membrane protein complex subunit 7 (EMC7), found in Homo sapiens (Human).